We begin with the raw amino-acid sequence, 269 residues long: Cytochrome c oxidase subunit 3 (269 aa).

Topologically, residues 1-22 are mitochondrial matrix; it reads MTNLIRSNFQDHPFHLVSPSPW. Residues 23 to 41 form a helical membrane-spanning segment; it reads PLNTSVCLLNLTTTGALSM. At 42–48 the chain is on the mitochondrial intermembrane side; the sequence is HNFNNIH. The helical transmembrane segment at 49–73 threads the bilayer; it reads YLYYIALIGLVSAMFLWFRDIISEG. At 74 to 80 the chain is on the mitochondrial matrix side; sequence TFLGDHT. The helical transmembrane segment at 81 to 114 threads the bilayer; sequence LAVQRGLNLGIILFIVSEALFFLAIFWAFFHSAL. The Mitochondrial intermembrane segment spans residues 115 to 137; it reads TPTVELGAQWPPIGIEPVNPFEL. Residues 138 to 161 form a helical membrane-spanning segment; that stretch reads PLLNTVILLSSGATITYAHHALIK. Residues 162-164 lie on the Mitochondrial matrix side of the membrane; it reads GER. A helical membrane pass occupies residues 165-188; it reads EGALYGSIATILLAIIFTGFQGVE. At 189-201 the chain is on the mitochondrial intermembrane side; the sequence is YSVSSFTISDGAF. Residues 202 to 230 form a helical membrane-spanning segment; the sequence is GTCFFFSTGFHGIHVIIGTIFLAVALWRI. Residues 231-248 are Mitochondrial matrix-facing; the sequence is FAYHLTDNHHVGFEGGIL. Residues 249 to 265 traverse the membrane as a helical segment; it reads YWHFVDVVWLFLYISVY. The Mitochondrial intermembrane portion of the chain corresponds to 266–269; sequence YWGS.

This sequence belongs to the cytochrome c oxidase subunit 3 family. In terms of assembly, component of the cytochrome c oxidase (complex IV, CIV), a multisubunit enzyme composed of 11 subunits. The complex is composed of a catalytic core of 3 subunits Cox1, Cox2 and Cox3, encoded in the mitochondrial DNA, and 8 supernumerary subunits Cox4, Cox5a/Cox5, Cox6, Cox7, Cox8, Cox7a/Cox9, Cox6b/Cox12 and Cox6a/Cox13, which are encoded in the nuclear genome. The complex exists as a monomer or a dimer and forms respiratory supercomplexes (SCs) in the inner mitochondrial membrane with NADH-ubiquinone oxidoreductase (complex I, CI) and ubiquinol-cytochrome c oxidoreductase (cytochrome b-c1 complex, complex III, CIII), resulting in various different assemblies (supercomplexes I(1)IV(1), I(1)III(3)IV(2), III(2)IV(1) and III(2)IV(2) as well as larger supercomplexes of compositions like I(1)III(2)IV(5-6)).

It is found in the mitochondrion inner membrane. The enzyme catalyses 4 Fe(II)-[cytochrome c] + O2 + 8 H(+)(in) = 4 Fe(III)-[cytochrome c] + 2 H2O + 4 H(+)(out). Functionally, component of the cytochrome c oxidase, the last enzyme in the mitochondrial electron transport chain which drives oxidative phosphorylation. The respiratory chain contains 3 multisubunit complexes succinate dehydrogenase (complex II, CII), ubiquinol-cytochrome c oxidoreductase (cytochrome b-c1 complex, complex III, CIII) and cytochrome c oxidase (complex IV, CIV), that cooperate to transfer electrons derived from NADH and succinate to molecular oxygen, creating an electrochemical gradient over the inner membrane that drives transmembrane transport and the ATP synthase. Cytochrome c oxidase is the component of the respiratory chain that catalyzes the reduction of oxygen to water. Electrons originating from reduced cytochrome c in the intermembrane space (IMS) are transferred via the dinuclear copper A center (CU(A)) of Cox2 and heme A of Cox1 to the active site in Cox1, a binuclear center (BNC) formed by heme A3 and copper B (CU(B)). The BNC reduces molecular oxygen to 2 water molecules using 4 electrons from cytochrome c in the IMS and 4 protons from the mitochondrial matrix. This Neurospora crassa (strain ATCC 24698 / 74-OR23-1A / CBS 708.71 / DSM 1257 / FGSC 987) protein is Cytochrome c oxidase subunit 3 (cox-3).